The following is a 292-amino-acid chain: 4-hydroxy-tetrahydrodipicolinate synthase (292 aa).

Threonine 45 serves as a coordination point for pyruvate. The Proton donor/acceptor role is filled by tyrosine 133. Lysine 161 acts as the Schiff-base intermediate with substrate in catalysis. Isoleucine 203 serves as a coordination point for pyruvate.

This sequence belongs to the DapA family. As to quaternary structure, homotetramer; dimer of dimers.

It localises to the cytoplasm. It catalyses the reaction L-aspartate 4-semialdehyde + pyruvate = (2S,4S)-4-hydroxy-2,3,4,5-tetrahydrodipicolinate + H2O + H(+). The protein operates within amino-acid biosynthesis; L-lysine biosynthesis via DAP pathway; (S)-tetrahydrodipicolinate from L-aspartate: step 3/4. Its function is as follows. Catalyzes the condensation of (S)-aspartate-beta-semialdehyde [(S)-ASA] and pyruvate to 4-hydroxy-tetrahydrodipicolinate (HTPA). In Shigella dysenteriae serotype 1 (strain Sd197), this protein is 4-hydroxy-tetrahydrodipicolinate synthase.